A 105-amino-acid chain; its full sequence is Small ribosomal subunit protein uS10 (105 aa).

This sequence belongs to the universal ribosomal protein uS10 family. As to quaternary structure, part of the 30S ribosomal subunit.

Functionally, involved in the binding of tRNA to the ribosomes. The polypeptide is Small ribosomal subunit protein uS10 (Rickettsia felis (strain ATCC VR-1525 / URRWXCal2) (Rickettsia azadi)).